We begin with the raw amino-acid sequence, 556 residues long: Formate--tetrahydrofolate ligase (556 aa).

ATP is bound at residue 65 to 72 (TPAGEGKS).

Belongs to the formate--tetrahydrofolate ligase family.

It catalyses the reaction (6S)-5,6,7,8-tetrahydrofolate + formate + ATP = (6R)-10-formyltetrahydrofolate + ADP + phosphate. The protein operates within one-carbon metabolism; tetrahydrofolate interconversion. The chain is Formate--tetrahydrofolate ligase from Streptococcus pneumoniae (strain 70585).